We begin with the raw amino-acid sequence, 386 residues long: Alanine racemase (386 aa).

Lys48 acts as the Proton acceptor; specific for D-alanine in catalysis. At Lys48 the chain carries N6-(pyridoxal phosphate)lysine. Arg147 lines the substrate pocket. Tyr279 functions as the Proton acceptor; specific for L-alanine in the catalytic mechanism. Met327 contributes to the substrate binding site.

This sequence belongs to the alanine racemase family. The cofactor is pyridoxal 5'-phosphate.

The enzyme catalyses L-alanine = D-alanine. The protein operates within amino-acid biosynthesis; D-alanine biosynthesis; D-alanine from L-alanine: step 1/1. Catalyzes the interconversion of L-alanine and D-alanine. May also act on other amino acids. This is Alanine racemase (alr) from Prochlorococcus marinus (strain SARG / CCMP1375 / SS120).